The following is a 157-amino-acid chain: Serine-protein kinase RsbW (157 aa).

The protein belongs to the anti-sigma-factor family.

It carries out the reaction L-seryl-[protein] + ATP = O-phospho-L-seryl-[protein] + ADP + H(+). The catalysed reaction is L-threonyl-[protein] + ATP = O-phospho-L-threonyl-[protein] + ADP + H(+). Its function is as follows. Negative regulator of sigma-B activity. Phosphorylates and inactivates its specific antagonist protein, RsbV. Upon phosphorylation of RsbV, RsbW is released and binds to sigma-B, thereby blocking its ability to form an RNA polymerase holoenzyme (E-sigma-B). This is Serine-protein kinase RsbW from Listeria monocytogenes serovar 1/2a (strain ATCC BAA-679 / EGD-e).